A 98-amino-acid chain; its full sequence is U11-barytoxin-Tl1b (98 aa).

The N-terminal stretch at 1-21 (MKTLVLVAVLGLASLYLLSYA) is a signal peptide. Positions 22-50 (SEVQQLSRDEEEFRALVASFGGLFDTEER) are excised as a propeptide. 3 disulfide bridges follow: Cys-57-Cys-71, Cys-64-Cys-76, and Cys-70-Cys-89.

It belongs to the neurotoxin 10 (Hwtx-1) family. 25 (ICK4) subfamily. As to expression, expressed by the venom gland.

Its subcellular location is the secreted. Ion channel inhibitor. The protein is U11-barytoxin-Tl1b of Trittame loki (Brush-footed trapdoor spider).